The primary structure comprises 244 residues: Uridylate kinase (244 aa).

Lys-15–Gly-18 is a binding site for ATP. The involved in allosteric activation by GTP stretch occupies residues Gly-23–Gly-28. Position 57 (Gly-57) interacts with UMP. 2 residues coordinate ATP: Gly-58 and Arg-62. UMP is bound by residues Asp-77 and Thr-138–Thr-145. Thr-165, Phe-171, and Asp-174 together coordinate ATP.

It belongs to the UMP kinase family. Homohexamer.

Its subcellular location is the cytoplasm. The catalysed reaction is UMP + ATP = UDP + ADP. It functions in the pathway pyrimidine metabolism; CTP biosynthesis via de novo pathway; UDP from UMP (UMPK route): step 1/1. Allosterically activated by GTP. Inhibited by UTP. Its function is as follows. Catalyzes the reversible phosphorylation of UMP to UDP. The sequence is that of Uridylate kinase from Aeromonas hydrophila subsp. hydrophila (strain ATCC 7966 / DSM 30187 / BCRC 13018 / CCUG 14551 / JCM 1027 / KCTC 2358 / NCIMB 9240 / NCTC 8049).